An 843-amino-acid chain; its full sequence is Protein P (843 aa).

Positions 1–177 are terminal protein domain (TP); it reads MPLSYQHFRR…FCGSPYSWEQ (177 aa). The tract at residues 178–346 is spacer; sequence ELQHGSTSLN…YCLSHIINLL (169 aa). Disordered stretches follow at residues 180–202 and 226–315; these read QHGS…AQSS and QHKQ…VGSE. Positions 239-249 are enriched in basic residues; the sequence is RSGRLRSRVHT. Polar residues-rich tracts occupy residues 262–277 and 287–299; these read TGHS…SCFH and PSLS…TSTG. The polymerase/reverse transcriptase domain (RT) stretch occupies residues 347–690; that stretch reads EDWGPCYEHG…YMNLYPVARQ (344 aa). The Reverse transcriptase domain maps to 357–600; the sequence is EHHIRTPKTP…YSLHFMGYII (244 aa). Mg(2+) is bound by residues aspartate 429, aspartate 551, and aspartate 552.

This sequence belongs to the hepadnaviridae P protein family.

The enzyme catalyses DNA(n) + a 2'-deoxyribonucleoside 5'-triphosphate = DNA(n+1) + diphosphate. The catalysed reaction is Endonucleolytic cleavage to 5'-phosphomonoester.. Its activity is regulated as follows. Activated by host HSP70 and HSP40 in vitro to be able to bind the epsilon loop of the pgRNA. Because deletion of the RNase H region renders the protein partly chaperone-independent, the chaperones may be needed indirectly to relieve occlusion of the RNA-binding site by this domain. Inhibited by several reverse-transcriptase inhibitors: Lamivudine, Adefovir and Entecavir. In terms of biological role, multifunctional enzyme that converts the viral RNA genome into dsDNA in viral cytoplasmic capsids. This enzyme displays a DNA polymerase activity that can copy either DNA or RNA templates, and a ribonuclease H (RNase H) activity that cleaves the RNA strand of RNA-DNA heteroduplexes in a partially processive 3'- to 5'-endonucleasic mode. Neo-synthesized pregenomic RNA (pgRNA) are encapsidated together with the P protein, and reverse-transcribed inside the nucleocapsid. Initiation of reverse-transcription occurs first by binding the epsilon loop on the pgRNA genome, and is initiated by protein priming, thereby the 5'-end of (-)DNA is covalently linked to P protein. Partial (+)DNA is synthesized from the (-)DNA template and generates the relaxed circular DNA (RC-DNA) genome. After budding and infection, the RC-DNA migrates in the nucleus, and is converted into a plasmid-like covalently closed circular DNA (cccDNA). The activity of P protein does not seem to be necessary for cccDNA generation, and is presumably released from (+)DNA by host nuclear DNA repair machinery. The sequence is that of Protein P from Hepatitis B virus genotype H (isolate United States/LAS2523/2002) (HBV-H).